A 280-amino-acid polypeptide reads, in one-letter code: Vitamin B12-binding protein (280 aa).

Residues 1-27 (MMPLGLFPLPRAAAVLLISLLTLPAQA) form the signal peptide. The Fe/B12 periplasmic-binding domain occupies 30-277 (RVISLSPSTT…QMASIPTPVA (248 aa)). Tyr57 lines the cyanocob(III)alamin pocket. Cys190 and Cys266 form a disulfide bridge.

The protein belongs to the BtuF family. The complex is composed of two ATP-binding proteins (BtuD), two transmembrane proteins (BtuC) and a solute-binding protein (BtuF).

It is found in the periplasm. Its function is as follows. Part of the ABC transporter complex BtuCDF involved in vitamin B12 import. Binds vitamin B12 and delivers it to the periplasmic surface of BtuC. The protein is Vitamin B12-binding protein of Yersinia pestis bv. Antiqua (strain Antiqua).